The chain runs to 238 residues: Ribonuclease PH (238 aa).

Residues R86 and G124–R126 contribute to the phosphate site.

Belongs to the RNase PH family. Homohexameric ring arranged as a trimer of dimers.

It catalyses the reaction tRNA(n+1) + phosphate = tRNA(n) + a ribonucleoside 5'-diphosphate. Phosphorolytic 3'-5' exoribonuclease that plays an important role in tRNA 3'-end maturation. Removes nucleotide residues following the 3'-CCA terminus of tRNAs; can also add nucleotides to the ends of RNA molecules by using nucleoside diphosphates as substrates, but this may not be physiologically important. Probably plays a role in initiation of 16S rRNA degradation (leading to ribosome degradation) during starvation. This chain is Ribonuclease PH, found in Brucella abortus (strain S19).